The primary structure comprises 269 residues: Embryonic polyadenylate-binding protein 2 (269 aa).

A disordered region spans residues 26-54 (EAQGWGAWGRTEKTSLVPSAGSDKEAEEN). Residues 139–216 (RSVYVGNVDY…RVIKVLPKRT (78 aa)) form the RRM domain. The interval 240 to 269 (LQGSLQRKPRLRPHGQSRGRGRASPWFSPY) is disordered. Residues 246–260 (RKPRLRPHGQSRGRG) are compositionally biased toward basic residues.

The protein localises to the cytoplasm. Functionally, binds the poly(A) tail of mRNA. This is Embryonic polyadenylate-binding protein 2 (Pabpn1l) from Rattus norvegicus (Rat).